Reading from the N-terminus, the 286-residue chain is ATP synthase gamma chain (286 aa).

It belongs to the ATPase gamma chain family. As to quaternary structure, F-type ATPases have 2 components, CF(1) - the catalytic core - and CF(0) - the membrane proton channel. CF(1) has five subunits: alpha(3), beta(3), gamma(1), delta(1), epsilon(1). CF(0) has three main subunits: a, b and c.

Its subcellular location is the cell inner membrane. In terms of biological role, produces ATP from ADP in the presence of a proton gradient across the membrane. The gamma chain is believed to be important in regulating ATPase activity and the flow of protons through the CF(0) complex. The polypeptide is ATP synthase gamma chain (Pseudoalteromonas translucida (strain TAC 125)).